Reading from the N-terminus, the 1085-residue chain is Ankyrin repeat and IBR domain-containing protein 1 (1085 aa).

A lipid anchor (N-myristoyl glycine) is attached at Gly2. 2 ANK repeats span residues 45–75 (QHNT…NPNK) and 145–174 (KKNT…DLFA). Positions 282–322 (CQRSGVQMPTPPPSGYNAWDTLPSPRTPRTTRSSVTSPDEI) are disordered. Over residues 304–319 (PSPRTPRTTRSSVTSP) the composition is skewed to low complexity. The segment at 330-570 (DTSLCDICMC…GGYYRCTRYE (241 aa)) is TRIAD supradomain. Zn(2+) is bound by residues Cys334, Cys337, Cys352, His354, Cys357, Cys360, Cys379, Cys384, Cys466, Cys469, His474, Cys479, Cys520, and Cys523. The segment at 334 to 384 (CDICMCSISVFEDPVDMPCGHDFCRGCWEAFLNLKIQEGEAHNIFCPAYEC) adopts an RING-type 1 zinc-finger fold. The segment at 402 to 479 (DKRYLQFDIK…LGEAHEPCDC (78 aa)) adopts an IBR-type zinc-finger fold. The RING-type 2; atypical zinc-finger motif lies at 520-549 (CANCKSPIQKNEGCNHMQCAKCKYDFCWIC). Residue Cys533 is part of the active site. Residues Cys538, Cys541, Cys546, Cys549, His556, and Cys566 each contribute to the Zn(2+) site. Residues 576 to 641 (EEQSKEMTVE…RALKETEGGC (66 aa)) are a coiled coil. Ser738 is subject to Phosphoserine. Residues 764 to 808 (RRRHRQQRRRGDVHSLLSNPTDLDEPSESTFDLPEGSSGRRPGAS) are disordered. Positions 846-865 (EDDPNILLAIQLSLQESGLD) constitute a UIM domain. Phosphoserine is present on residues Ser879 and Ser906. 3 disordered regions span residues 884 to 907 (GSSL…ALSS), 921 to 959 (GADS…QDPS), and 1014 to 1085 (PPED…VHSV). Polar residues predominate over residues 926 to 959 (PFSTDTLSSRPLSETRSDFCPSSSDLDSAGQDPS). Residues 1018–1033 (SVSKDTGVHEGERAQM) are compositionally biased toward basic and acidic residues. A compositionally biased stretch (polar residues) spans 1068 to 1085 (ASQTPQTSSDWLEQVHSV).

Belongs to the RBR family.

The enzyme catalyses [E2 ubiquitin-conjugating enzyme]-S-ubiquitinyl-L-cysteine + [acceptor protein]-L-lysine = [E2 ubiquitin-conjugating enzyme]-L-cysteine + [acceptor protein]-N(6)-ubiquitinyl-L-lysine.. Its function is as follows. Might act as an E3 ubiquitin-protein ligase, or as part of E3 complex, which accepts ubiquitin from specific E2 ubiquitin-conjugating enzymes and then transfers it to substrates. This chain is Ankyrin repeat and IBR domain-containing protein 1 (Ankib1), found in Mus musculus (Mouse).